A 296-amino-acid polypeptide reads, in one-letter code: Fructose-bisphosphate aldolase class 1 (296 aa).

Residue E175 is the Proton acceptor of the active site. K212 acts as the Schiff-base intermediate with dihydroxyacetone-P in catalysis.

It belongs to the class I fructose-bisphosphate aldolase family.

The enzyme catalyses beta-D-fructose 1,6-bisphosphate = D-glyceraldehyde 3-phosphate + dihydroxyacetone phosphate. It functions in the pathway carbohydrate degradation; glycolysis; D-glyceraldehyde 3-phosphate and glycerone phosphate from D-glucose: step 4/4. The chain is Fructose-bisphosphate aldolase class 1 from Staphylococcus aureus (strain bovine RF122 / ET3-1).